A 241-amino-acid chain; its full sequence is Ribonuclease P protein component 3 (241 aa).

This sequence belongs to the eukaryotic/archaeal RNase P protein component 3 family. As to quaternary structure, consists of a catalytic RNA component and at least 4-5 protein subunits.

It localises to the cytoplasm. It catalyses the reaction Endonucleolytic cleavage of RNA, removing 5'-extranucleotides from tRNA precursor.. Part of ribonuclease P, a protein complex that generates mature tRNA molecules by cleaving their 5'-ends. This chain is Ribonuclease P protein component 3, found in Methanococcoides burtonii (strain DSM 6242 / NBRC 107633 / OCM 468 / ACE-M).